A 178-amino-acid polypeptide reads, in one-letter code: Ribosome maturation factor RimP (178 aa).

Belongs to the RimP family.

Its subcellular location is the cytoplasm. Required for maturation of 30S ribosomal subunits. This chain is Ribosome maturation factor RimP, found in Corynebacterium glutamicum (strain ATCC 13032 / DSM 20300 / JCM 1318 / BCRC 11384 / CCUG 27702 / LMG 3730 / NBRC 12168 / NCIMB 10025 / NRRL B-2784 / 534).